A 275-amino-acid chain; its full sequence is Large ribosomal subunit protein uL2 (275 aa).

The interval 236–263 (EGRGKGQHPVTPWGMPTKGYKTRRGRRA) is disordered.

This sequence belongs to the universal ribosomal protein uL2 family. As to quaternary structure, part of the 50S ribosomal subunit. Forms a bridge to the 30S subunit in the 70S ribosome.

Its function is as follows. One of the primary rRNA binding proteins. Required for association of the 30S and 50S subunits to form the 70S ribosome, for tRNA binding and peptide bond formation. It has been suggested to have peptidyltransferase activity; this is somewhat controversial. Makes several contacts with the 16S rRNA in the 70S ribosome. The sequence is that of Large ribosomal subunit protein uL2 from Pseudothermotoga lettingae (strain ATCC BAA-301 / DSM 14385 / NBRC 107922 / TMO) (Thermotoga lettingae).